Consider the following 297-residue polypeptide: MKTSLRLEDGTKNSLQIPIDLIIEIFLRLSVNSIARCRCVSKQWASTLSRPYFTELFLTRSLARPKLLFAYRKGSDYLFLSSPQLQNPDDDHKKSSPVVVNYHMHHILTLGSGNMSWRTIQCCIPHRSFDGGICIDGLIYYYAGVNNNDIVIVCFDVRSEEFRFIIGALHHGSLINYNGKLSLYLPSTVYSRFNGVIRSIKLWVLEDAKRQEWSEHTYILPAMHDIMKTTDLRCVGMTQTKEFVFWSIKGMRFYVFYYNIERNTIKKVEMQGMEAFKESNVYTFLDHVEDVKLMQFF.

The 50-residue stretch at 11–60 (TKNSLQIPIDLIIEIFLRLSVNSIARCRCVSKQWASTLSRPYFTELFLTR) folds into the F-box domain.

In Arabidopsis thaliana (Mouse-ear cress), this protein is Putative F-box protein At2g19630.